Consider the following 226-residue polypeptide: Ethylene-responsive transcription factor-like protein At4g13040 (226 aa).

Disordered regions lie at residues 63–109 (EERS…RKRV) and 195–226 (KKPKSRIEHEDTKINASMPHQPEEEEQDSDKM). Residues 97–109 (PPKRRKQHRRKRV) are compositionally biased toward basic residues. Positions 105-171 (RRKRVHNQEP…REPNFELSEE (67 aa)) form a DNA-binding region, AP2/ERF. Over residues 217–226 (EEEEQDSDKM) the composition is skewed to acidic residues.

The protein belongs to the AP2/ERF transcription factor family.

The protein resides in the nucleus. Functionally, probably acts as a transcriptional activator. Binds to the GCC-box pathogenesis-related promoter element. May be involved in the regulation of gene expression by stress factors and by components of stress signal transduction pathways. The sequence is that of Ethylene-responsive transcription factor-like protein At4g13040 from Arabidopsis thaliana (Mouse-ear cress).